The sequence spans 142 residues: Large ribosomal subunit protein uL11 (142 aa).

It belongs to the universal ribosomal protein uL11 family. Part of the ribosomal stalk of the 50S ribosomal subunit. Interacts with L10 and the large rRNA to form the base of the stalk. L10 forms an elongated spine to which L12 dimers bind in a sequential fashion forming a multimeric L10(L12)X complex. Post-translationally, one or more lysine residues are methylated.

Functionally, forms part of the ribosomal stalk which helps the ribosome interact with GTP-bound translation factors. The protein is Large ribosomal subunit protein uL11 of Shewanella pealeana (strain ATCC 700345 / ANG-SQ1).